The following is a 964-amino-acid chain: Isoleucine--tRNA ligase (964 aa).

The short motif at 66–76 (PYANGDIHIGH) is the 'HIGH' region element. Glu-596 lines the L-isoleucyl-5'-AMP pocket. The short motif at 637–641 (KMSKS) is the 'KMSKS' region element. Lys-640 is an ATP binding site. Residues Cys-927, Cys-930, Cys-947, and Cys-950 each coordinate Zn(2+).

Belongs to the class-I aminoacyl-tRNA synthetase family. IleS type 1 subfamily. In terms of assembly, monomer. It depends on Zn(2+) as a cofactor.

It localises to the cytoplasm. The enzyme catalyses tRNA(Ile) + L-isoleucine + ATP = L-isoleucyl-tRNA(Ile) + AMP + diphosphate. Functionally, catalyzes the attachment of isoleucine to tRNA(Ile). As IleRS can inadvertently accommodate and process structurally similar amino acids such as valine, to avoid such errors it has two additional distinct tRNA(Ile)-dependent editing activities. One activity is designated as 'pretransfer' editing and involves the hydrolysis of activated Val-AMP. The other activity is designated 'posttransfer' editing and involves deacylation of mischarged Val-tRNA(Ile). The sequence is that of Isoleucine--tRNA ligase from Cupriavidus necator (strain ATCC 17699 / DSM 428 / KCTC 22496 / NCIMB 10442 / H16 / Stanier 337) (Ralstonia eutropha).